The primary structure comprises 461 residues: Ornithine decarboxylase (461 aa).

K69 is subject to N6-(pyridoxal phosphate)lysine. Residues S200, G237, and 274-277 (EPGR) each bind pyridoxal 5'-phosphate. S303 carries the phosphoserine; by CK2 modification. 331–332 (YD) contacts substrate. The active-site Proton donor; shared with dimeric partner is the C360. C360 carries the S-nitrosocysteine modification. Residue D361 participates in substrate binding. Residue Y389 coordinates pyridoxal 5'-phosphate.

Belongs to the Orn/Lys/Arg decarboxylase class-II family. As to quaternary structure, homodimer. Only the dimer is catalytically active, as the active sites are constructed of residues from both monomers. Pyridoxal 5'-phosphate is required as a cofactor.

The enzyme catalyses L-ornithine + H(+) = putrescine + CO2. It functions in the pathway amine and polyamine biosynthesis; putrescine biosynthesis via L-ornithine pathway; putrescine from L-ornithine: step 1/1. With respect to regulation, inhibited by antizymes (AZs) OAZ1, OAZ2 and OAZ3 in response to polyamine levels. AZs inhibit the assembly of the functional homodimer by binding to ODC monomers. Additionally, OAZ1 targets ODC monomers for ubiquitin-independent proteolytic destruction by the 26S proteasome. Catalyzes the first and rate-limiting step of polyamine biosynthesis that converts ornithine into putrescine, which is the precursor for the polyamines, spermidine and spermine. Polyamines are essential for cell proliferation and are implicated in cellular processes, ranging from DNA replication to apoptosis. The polypeptide is Ornithine decarboxylase (Odc1) (Rattus norvegicus (Rat)).